A 342-amino-acid chain; its full sequence is tRNA N6-adenosine threonylcarbamoyltransferase (342 aa).

2 residues coordinate Fe cation: H111 and H115. Residues A133 to G137, D166, G179, D183, and N272 each bind substrate. D300 is a Fe cation binding site.

The protein belongs to the KAE1 / TsaD family. Fe(2+) is required as a cofactor.

The protein resides in the cytoplasm. It carries out the reaction L-threonylcarbamoyladenylate + adenosine(37) in tRNA = N(6)-L-threonylcarbamoyladenosine(37) in tRNA + AMP + H(+). Its function is as follows. Required for the formation of a threonylcarbamoyl group on adenosine at position 37 (t(6)A37) in tRNAs that read codons beginning with adenine. Is involved in the transfer of the threonylcarbamoyl moiety of threonylcarbamoyl-AMP (TC-AMP) to the N6 group of A37, together with TsaE and TsaB. TsaD likely plays a direct catalytic role in this reaction. The sequence is that of tRNA N6-adenosine threonylcarbamoyltransferase from Geobacter sp. (strain M21).